The following is a 463-amino-acid chain: T-box transcription factor TBX1 (463 aa).

2 disordered regions span residues 39–58 and 75–103; these read SPSPGDPYSQHEPHYEPCSA and GASSSSCASSTPGSGSTGSSGSSKAPVKK. Over residues 75-97 the composition is skewed to low complexity; that stretch reads GASSSSCASSTPGSGSTGSSGSS. Positions 119–297 form a DNA-binding region, T-box; the sequence is LWDEFNQLGT…SNPFAKGFRD (179 aa). 2 disordered regions span residues 320–354 and 367–405; these read RSRNPVSSPPQNGSDKDGDGRREYERDTSGTPLHG and SPSLPVPGGLVPLSTGRPSPPHELRLDPHSQGSEPLHHH. A compositionally biased stretch (polar residues) spans 323-332; the sequence is NPVSSPPQNG. Basic and acidic residues predominate over residues 333–347; it reads SDKDGDGRREYERDT. Residues 367-380 show a composition bias toward low complexity; it reads SPSLPVPGGLVPLS. A Nuclear localization signal motif is present at residues 420–431; sequence KTRPAPYPLPSI.

As to quaternary structure, binds DNA as a dimer. Interacts with dscr6/ripply3.

The protein resides in the nucleus. In terms of biological role, probable transcriptional regulator involved in developmental processes. Binds to the palindromic T site 5'-TTCACACCTAGGTGTGAA-3' DNA sequence. Induces pre-placodal ectoderm (PPE) gene expression in regions where RIPPLY3 is absent. Plays a role in the formation of the anteroposterior (AP) axis during embryonic development; required to establish the posterolateral border of the pre-placodal ectoderm (PPE) acting downstream of the retinoic acid receptor (RAR) signaling. This is T-box transcription factor TBX1 (tbx1) from Xenopus tropicalis (Western clawed frog).